The primary structure comprises 528 residues: Ceramide glucosyltransferase (528 aa).

Over 1–6 (MYSFIE) the chain is Lumenal. Residues 7 to 27 (CIAGALFVLGCVVVTLVVIGV) traverse the membrane as a helical segment. Over 28–369 (RALLYNFRNR…TVLSATILEP (342 aa)) the chain is Cytoplasmic. A short sequence motif (D1) is located at residue D94. Position 154 (D154) is a short sequence motif, D2. A short sequence motif (D3) is located at residue D308. The active-site Proton acceptor is the D308. The short motif at 349–353 (RRSRW) is the (Q/R)XXRW element. Residues 370–390 (FTECFLFATYMSLAMTTIPVL) traverse the membrane as a helical segment. Over 391 to 402 (SQNLGIPKTWNA) the chain is Lumenal. Residues 403-423 (TAIAWFTITTLWMLIDYIGYL) form a helical membrane-spanning segment. The Cytoplasmic segment spans residues 424–457 (RLHSGVTMEVDEHTPYFAKGFKNTGGIKRRPFLE). A helical membrane pass occupies residues 458–478 (FLAAWIGREGLAFPVWAYAVV). The Lumenal portion of the chain corresponds to 479-528 (FGNTVNWRGRLFYIHWDTTVDAVEPREERTREVRTPELERGPSRNKHRVD). Residues 503 to 528 (PREERTREVRTPELERGPSRNKHRVD) form a disordered region.

This sequence belongs to the glycosyltransferase 2 family.

Its subcellular location is the golgi apparatus membrane. It carries out the reaction an N-acylsphing-4-enine + UDP-alpha-D-glucose = a beta-D-glucosyl-(1&lt;-&gt;1')-N-acylsphing-4-enine + UDP + H(+). The protein operates within lipid metabolism; sphingolipid metabolism. Functionally, catalyzes the final step in the biosynthesis of the membrane lipid glucosylceramide (GluCer), the transfer of glucose to ceramide. Glucosylceramides play important roles in growth, differentiation and pathogenicity. Contribution to fungal pathogenesis is host-dependent. The chain is Ceramide glucosyltransferase from Gibberella zeae (strain ATCC MYA-4620 / CBS 123657 / FGSC 9075 / NRRL 31084 / PH-1) (Wheat head blight fungus).